We begin with the raw amino-acid sequence, 147 residues long: Sec-independent protein translocase protein TatB (147 aa).

The chain crosses the membrane as a helical span at residues 1-21; sequence MFDIGFWELVVIGVVALVVLG. A disordered region spans residues 114–147; that stretch reads EPVAPISVATPDEEPTVIPAARAQPSAEQGEVKP.

This sequence belongs to the TatB family. In terms of assembly, the Tat system comprises two distinct complexes: a TatABC complex, containing multiple copies of TatA, TatB and TatC subunits, and a separate TatA complex, containing only TatA subunits. Substrates initially bind to the TatABC complex, which probably triggers association of the separate TatA complex to form the active translocon.

It localises to the cell inner membrane. In terms of biological role, part of the twin-arginine translocation (Tat) system that transports large folded proteins containing a characteristic twin-arginine motif in their signal peptide across membranes. Together with TatC, TatB is part of a receptor directly interacting with Tat signal peptides. TatB may form an oligomeric binding site that transiently accommodates folded Tat precursor proteins before their translocation. The polypeptide is Sec-independent protein translocase protein TatB (Aeromonas hydrophila subsp. hydrophila (strain ATCC 7966 / DSM 30187 / BCRC 13018 / CCUG 14551 / JCM 1027 / KCTC 2358 / NCIMB 9240 / NCTC 8049)).